Reading from the N-terminus, the 400-residue chain is Coiled-coil domain-containing glutamate-rich protein 1 (400 aa).

Over residues 1–11 (MTQTVNEREDP) the composition is skewed to basic and acidic residues. 3 disordered regions span residues 1–68 (MTQT…IPGP), 134–164 (RPPGRKKRWGRRGRGLRRHPRRSFPRNPPID), and 203–353 (QEKL…DKFL). A compositionally biased stretch (basic residues) spans 31-45 (YHRRQRGAPMSKRRY). Residues 46-57 (RDGPKTEYEAPR) show a composition bias toward basic and acidic residues. Over residues 137-157 (GRKKRWGRRGRGLRRHPRRSF) the composition is skewed to basic residues. Positions 209–220 (QQAALRAHQAQA) are enriched in low complexity. Positions 255–271 (PSLTFSPAPGQQNQSPT) are enriched in polar residues. Residues 275-347 (VEEEEKNVDD…EAGLEEGEQR (73 aa)) are compositionally biased toward acidic residues. The stretch at 299–335 (EEEEVDGESEDEDVDEEEVEEAGNGEEREEDQEEEDV) forms a coiled coil.

The protein resides in the nucleus. Its function is as follows. Regulator of histone epigenetic modifications and chromatin compaction into the sperm head, required for histone-to-protamine (HTP) transition. HTP is a key event in which somatic histones are first replaced by testis-specific histone variants, then transition proteins (TNPs) are incorporated into the spermatid nucleus, and finally protamines (PRMs) replace the TNPs to promote chromatin condensation. The sequence is that of Coiled-coil domain-containing glutamate-rich protein 1 (Ccer1) from Rattus norvegicus (Rat).